The following is a 697-amino-acid chain: ATP-dependent zinc metalloprotease FtsH (697 aa).

Residues 1 to 23 (MSQNERDSLELERKNTPPDGPRL) are disordered. The Cytoplasmic portion of the chain corresponds to 1 to 29 (MSQNERDSLELERKNTPPDGPRLPERRPR). A helical transmembrane segment spans residues 30-50 (FSVWIYLAIFLALLVHFFLFW). The Periplasmic segment spans residues 51 to 158 (TGTDTSTIEY…QFTARIEENW (108 aa)). The helical transmembrane segment at 159–179 (FGGLLTWIFPLILIVALWVFL) threads the bilayer. Topologically, residues 180 to 697 (LRRMSPSSQV…TERPESSSAP (518 aa)) are cytoplasmic. 251-258 (GPPGTGKT) contacts ATP. His-474 is a Zn(2+) binding site. Residue Glu-475 is part of the active site. The Zn(2+) site is built by His-478 and Asp-550. A disordered region spans residues 649 to 697 (GPRPYGDYPSPNGKDVEELKDLQKGEPTSSSAVEAPAPQTERPESSSAP). Over residues 662-672 (KDVEELKDLQK) the composition is skewed to basic and acidic residues.

In the central section; belongs to the AAA ATPase family. It in the C-terminal section; belongs to the peptidase M41 family. As to quaternary structure, homohexamer. Zn(2+) is required as a cofactor.

The protein resides in the cell inner membrane. Functionally, acts as a processive, ATP-dependent zinc metallopeptidase for both cytoplasmic and membrane proteins. Plays a role in the quality control of integral membrane proteins. The polypeptide is ATP-dependent zinc metalloprotease FtsH (Rhodothermus marinus (strain ATCC 43812 / DSM 4252 / R-10) (Rhodothermus obamensis)).